A 341-amino-acid polypeptide reads, in one-letter code: Holliday junction branch migration complex subunit RuvB (341 aa).

Positions 1–182 are large ATPase domain (RuvB-L); sequence MTSSDPTLRP…FGIPTRLQFY (182 aa). ATP-binding positions include leucine 21, arginine 22, glycine 63, lysine 66, threonine 67, threonine 68, 129-131, arginine 172, tyrosine 182, and arginine 219; that span reads EDF. Residue threonine 67 coordinates Mg(2+). The small ATPAse domain (RuvB-S) stretch occupies residues 183 to 253; it reads TEDELDLIVA…IADRALTRLG (71 aa). Positions 256–341 are head domain (RuvB-H); it reads HLGLDLGDRR…KGPGQSDLFG (86 aa). The DNA site is built by arginine 292, arginine 311, and arginine 316.

This sequence belongs to the RuvB family. Homohexamer. Forms an RuvA(8)-RuvB(12)-Holliday junction (HJ) complex. HJ DNA is sandwiched between 2 RuvA tetramers; dsDNA enters through RuvA and exits via RuvB. An RuvB hexamer assembles on each DNA strand where it exits the tetramer. Each RuvB hexamer is contacted by two RuvA subunits (via domain III) on 2 adjacent RuvB subunits; this complex drives branch migration. In the full resolvosome a probable DNA-RuvA(4)-RuvB(12)-RuvC(2) complex forms which resolves the HJ.

It is found in the cytoplasm. The enzyme catalyses ATP + H2O = ADP + phosphate + H(+). The RuvA-RuvB-RuvC complex processes Holliday junction (HJ) DNA during genetic recombination and DNA repair, while the RuvA-RuvB complex plays an important role in the rescue of blocked DNA replication forks via replication fork reversal (RFR). RuvA specifically binds to HJ cruciform DNA, conferring on it an open structure. The RuvB hexamer acts as an ATP-dependent pump, pulling dsDNA into and through the RuvAB complex. RuvB forms 2 homohexamers on either side of HJ DNA bound by 1 or 2 RuvA tetramers; 4 subunits per hexamer contact DNA at a time. Coordinated motions by a converter formed by DNA-disengaged RuvB subunits stimulates ATP hydrolysis and nucleotide exchange. Immobilization of the converter enables RuvB to convert the ATP-contained energy into a lever motion, pulling 2 nucleotides of DNA out of the RuvA tetramer per ATP hydrolyzed, thus driving DNA branch migration. The RuvB motors rotate together with the DNA substrate, which together with the progressing nucleotide cycle form the mechanistic basis for DNA recombination by continuous HJ branch migration. Branch migration allows RuvC to scan DNA until it finds its consensus sequence, where it cleaves and resolves cruciform DNA. The protein is Holliday junction branch migration complex subunit RuvB of Cereibacter sphaeroides (strain ATCC 17029 / ATH 2.4.9) (Rhodobacter sphaeroides).